A 266-amino-acid chain; its full sequence is Apolipoprotein A-I (266 aa).

The first 18 residues, 1–18 (MKAVVLTLAVLFLTGSQA), serve as a signal peptide directing secretion. 2 consecutive repeat copies span residues 67–88 (LKLL…EQIG) and 89–110 (PVTQ…QEMS). The tract at residues 67–266 (LKLLDNWDSL…DEAAKKLNAQ (200 aa)) is 10 X approximate tandem repeats. Methionine 109 carries the post-translational modification Methionine sulfoxide. The 3; half-length repeat unit spans residues 111–121 (KDLEEVKQKVQ). Repeat copies occupy residues 122–142 (PYLD…RQKV), 144–165 (PLGA…EKLS), 166–187 (PLGE…AQLA), 188–210 (PYSD…DGGA), and 211–231 (SLAE…EKAK). One copy of the 9; half-length repeat lies at 232–242 (PALEDLRQGLL). Residues 243–266 (PVLESFKVSLLAAVDEAAKKLNAQ) form repeat 10.

Belongs to the apolipoprotein A1/A4/E family. Homodimer. Interacts with APOA1BP and CLU. Component of a sperm activating protein complex (SPAP), consisting of APOA1, an immunoglobulin heavy chain, an immunoglobulin light chain and albumin. Interacts with NDRG1. Interacts with SCGB3A2. Interacts with NAXE and YJEFN3. Post-translationally, glycosylated. Palmitoylated. In terms of processing, phosphorylation sites are present in the extracellular medium. Major protein of plasma HDL, also found in chylomicrons.

The protein resides in the secreted. In terms of biological role, participates in the reverse transport of cholesterol from tissues to the liver for excretion by promoting cholesterol efflux from tissues and by acting as a cofactor for the lecithin cholesterol acyltransferase (LCAT). As part of the SPAP complex, activates spermatozoa motility. The protein is Apolipoprotein A-I (APOA1) of Ailuropoda melanoleuca (Giant panda).